The sequence spans 469 residues: 3-phosphoshikimate 1-carboxyvinyltransferase (469 aa).

Residues 21 to 45 are disordered; sequence KDTILTHSDQPRPLQSRANGPLTGK. Residues Lys-52, Ser-53, and Arg-57 each contribute to the 3-phosphoshikimate site. Lys-52 contributes to the phosphoenolpyruvate binding site. Phosphoenolpyruvate-binding residues include Gly-125 and Arg-153. The 3-phosphoshikimate site is built by Ser-199, Gln-201, Asp-352, and Lys-379. Phosphoenolpyruvate is bound at residue Gln-201. Residue Asp-352 is the Proton acceptor of the active site. The phosphoenolpyruvate site is built by Arg-383 and Arg-426.

The protein belongs to the EPSP synthase family. In terms of assembly, monomer.

Its subcellular location is the cytoplasm. It catalyses the reaction 3-phosphoshikimate + phosphoenolpyruvate = 5-O-(1-carboxyvinyl)-3-phosphoshikimate + phosphate. The protein operates within metabolic intermediate biosynthesis; chorismate biosynthesis; chorismate from D-erythrose 4-phosphate and phosphoenolpyruvate: step 6/7. Catalyzes the transfer of the enolpyruvyl moiety of phosphoenolpyruvate (PEP) to the 5-hydroxyl of shikimate-3-phosphate (S3P) to produce enolpyruvyl shikimate-3-phosphate and inorganic phosphate. The polypeptide is 3-phosphoshikimate 1-carboxyvinyltransferase (Bradyrhizobium diazoefficiens (strain JCM 10833 / BCRC 13528 / IAM 13628 / NBRC 14792 / USDA 110)).